The primary structure comprises 186 residues: Probable chorismate pyruvate-lyase (186 aa).

Substrate contacts are provided by arginine 80, leucine 118, and glutamate 170.

This sequence belongs to the UbiC family.

Its subcellular location is the cytoplasm. It carries out the reaction chorismate = 4-hydroxybenzoate + pyruvate. It participates in cofactor biosynthesis; ubiquinone biosynthesis. Functionally, removes the pyruvyl group from chorismate, with concomitant aromatization of the ring, to provide 4-hydroxybenzoate (4HB) for the ubiquinone pathway. The sequence is that of Probable chorismate pyruvate-lyase from Pseudomonas syringae pv. syringae (strain B728a).